The sequence spans 888 residues: Glutamate receptor 3 (888 aa).

Residues 1 to 22 (MGQSVLRAVFFLVLGLLGHSHG) form the signal peptide. The Extracellular segment spans residues 23–546 (GFPNTISIGG…GVFSFLDPLA (524 aa)). 5 N-linked (GlcNAc...) asparagine glycosylation sites follow: Asn57, Asn260, Asn374, Asn409, and Asn416. Cys85 and Cys334 are oxidised to a cystine. Residues Pro502, Thr504, and Arg509 each coordinate L-glutamate. A helical transmembrane segment spans residues 547–567 (YEIWMCIVFAYIGVSVVLFLV). Residues 568-596 (SRFSPYEWHLEDNNEEPRDPQSPPDPPNE) lie on the Cytoplasmic side of the membrane. The segment at residues 597 to 612 (FGIFNSLWFSLGAFMQ) is an intramembrane region (helical; Pore-forming). An intramembrane segment occupies 613 to 615 (QGC). Cys615 carries the S-palmitoyl cysteine lipid modification. The Cytoplasmic segment spans residues 616 to 621 (DISPRS). The helical transmembrane segment at 622–642 (LSGRIVGGVWWFFTLIIISSY) threads the bilayer. Residues 643-817 (TANLAAFLTV…DKTSALSLSN (175 aa)) lie on the Extracellular side of the membrane. The L-glutamate site is built by Ser680, Thr681, and Glu731. A disulfide bridge connects residues Cys744 and Cys799. Residues 818–838 (VAGVFYILVGGLGLAMMVALI) traverse the membrane as a helical segment. Residues 839–888 (EFCYKSRAESKRMKLTKNTQNFKPAPATNTQNYATYREGYNVYGTESVKI) are Cytoplasmic-facing. The S-palmitoyl cysteine moiety is linked to residue Cys841. 2 positions are modified to phosphotyrosine: Tyr871 and Tyr881.

This sequence belongs to the glutamate-gated ion channel (TC 1.A.10.1) family. GRIA3 subfamily. As to quaternary structure, homotetramer or heterotetramer of pore-forming glutamate receptor subunits. Tetramers may be formed by the dimerization of dimers. Interacts with PICK1, GRIP1 and GRIP2. Found in a complex with GRIA1, GRIA2, GRIA4, CNIH2, CNIH3, CACNG2, CACNG3, CACNG4, CACNG5, CACNG7 and CACNG8. Interacts with CACNG5. Found in a complex with GRIA1, GRIA2, GRIA4, DLG4, CACNG8 and CNIH2.

Its subcellular location is the cell membrane. The protein localises to the postsynaptic cell membrane. It is found in the postsynaptic density membrane. It catalyses the reaction Ca(2+)(in) = Ca(2+)(out). Its function is as follows. Ionotropic glutamate receptor that functions as a ligand-gated cation channel, gated by L-glutamate and glutamatergic agonists such as alpha-amino-3-hydroxy-5-methyl-4-isoxazolepropionic acid (AMPA), quisqualic acid, and kainic acid. L-glutamate acts as an excitatory neurotransmitter at many synapses in the central nervous system and plays an important role in fast excitatory synaptic transmission by inducing long-term potentiation. Binding of the excitatory neurotransmitter L-glutamate induces a conformation change, leading to the opening of the cation channel, and thereby converts the chemical signal to an electrical impulse upon entry of calcium. The receptor then desensitizes rapidly and enters a transient inactive state, characterized by the presence of bound agonist. In the presence of CACNG8, shows resensitization which is characterized by a delayed accumulation of current flux upon continued application of glutamate. The chain is Glutamate receptor 3 from Rattus norvegicus (Rat).